We begin with the raw amino-acid sequence, 336 residues long: Fructose-1,6-bisphosphatase class 1 (336 aa).

Residues glutamate 90, aspartate 112, leucine 114, and aspartate 115 each coordinate Mg(2+). Residues 115–118 (DGSS), asparagine 211, and lysine 277 each bind substrate. Glutamate 283 is a binding site for Mg(2+).

The protein belongs to the FBPase class 1 family. As to quaternary structure, homotetramer. Requires Mg(2+) as cofactor.

It localises to the cytoplasm. It carries out the reaction beta-D-fructose 1,6-bisphosphate + H2O = beta-D-fructose 6-phosphate + phosphate. It functions in the pathway carbohydrate biosynthesis; gluconeogenesis. The chain is Fructose-1,6-bisphosphatase class 1 from Pseudomonas aeruginosa (strain ATCC 15692 / DSM 22644 / CIP 104116 / JCM 14847 / LMG 12228 / 1C / PRS 101 / PAO1).